A 609-amino-acid polypeptide reads, in one-letter code: Proteasome-associated ATPase (609 aa).

The disordered stretch occupies residues 1 to 24 (MGESERSEAFGIPRDSPLSSGDAA). A coiled-coil region spans residues 20–96 (SGDAAELEQL…LREEVDRLGQ (77 aa)). ATP is bound at residue 296–301 (GCGKTL). Residues 608-609 (YL) form a docks into pockets in the proteasome alpha-ring region.

The protein belongs to the AAA ATPase family. Homohexamer. Assembles into a hexameric ring structure that caps the 20S proteasome core. Strongly interacts with the prokaryotic ubiquitin-like protein Pup through a hydrophobic interface; the interacting region of ARC lies in its N-terminal coiled-coil domain. There is one Pup binding site per ARC hexamer ring. Upon ATP-binding, the C-terminus of ARC interacts with the alpha-rings of the proteasome core, possibly by binding to the intersubunit pockets.

It participates in protein degradation; proteasomal Pup-dependent pathway. Functionally, ATPase which is responsible for recognizing, binding, unfolding and translocation of pupylated proteins into the bacterial 20S proteasome core particle. May be essential for opening the gate of the 20S proteasome via an interaction with its C-terminus, thereby allowing substrate entry and access to the site of proteolysis. Thus, the C-termini of the proteasomal ATPase may function like a 'key in a lock' to induce gate opening and therefore regulate proteolysis. This Mycobacterium bovis (strain BCG / Pasteur 1173P2) protein is Proteasome-associated ATPase.